We begin with the raw amino-acid sequence, 402 residues long: 1-deoxy-D-xylulose 5-phosphate reductoisomerase (402 aa).

The NADPH site is built by Thr-21, Gly-22, Ser-23, Ile-24, Gly-47, Asn-50, and Asn-127. Residue Lys-128 coordinates 1-deoxy-D-xylulose 5-phosphate. Glu-129 is a binding site for NADPH. Asp-151 contacts Mn(2+). 1-deoxy-D-xylulose 5-phosphate contacts are provided by Ser-152, Glu-153, Ser-177, and His-200. Residue Glu-153 participates in Mn(2+) binding. Gly-206 is an NADPH binding site. 1-deoxy-D-xylulose 5-phosphate contacts are provided by Ser-213, Asn-218, Lys-219, and Glu-222. Glu-222 is a binding site for Mn(2+).

It belongs to the DXR family. Requires Mg(2+) as cofactor. Mn(2+) serves as cofactor.

It catalyses the reaction 2-C-methyl-D-erythritol 4-phosphate + NADP(+) = 1-deoxy-D-xylulose 5-phosphate + NADPH + H(+). Its pathway is isoprenoid biosynthesis; isopentenyl diphosphate biosynthesis via DXP pathway; isopentenyl diphosphate from 1-deoxy-D-xylulose 5-phosphate: step 1/6. Functionally, catalyzes the NADPH-dependent rearrangement and reduction of 1-deoxy-D-xylulose-5-phosphate (DXP) to 2-C-methyl-D-erythritol 4-phosphate (MEP). The polypeptide is 1-deoxy-D-xylulose 5-phosphate reductoisomerase (Mycobacterium ulcerans (strain Agy99)).